The primary structure comprises 158 residues: NAD(P)H-quinone oxidoreductase subunit J, chloroplastic (158 aa).

This sequence belongs to the complex I 30 kDa subunit family. In terms of assembly, NDH is composed of at least 16 different subunits, 5 of which are encoded in the nucleus.

The protein localises to the plastid. The protein resides in the chloroplast thylakoid membrane. The catalysed reaction is a plastoquinone + NADH + (n+1) H(+)(in) = a plastoquinol + NAD(+) + n H(+)(out). The enzyme catalyses a plastoquinone + NADPH + (n+1) H(+)(in) = a plastoquinol + NADP(+) + n H(+)(out). NDH shuttles electrons from NAD(P)H:plastoquinone, via FMN and iron-sulfur (Fe-S) centers, to quinones in the photosynthetic chain and possibly in a chloroplast respiratory chain. The immediate electron acceptor for the enzyme in this species is believed to be plastoquinone. Couples the redox reaction to proton translocation, and thus conserves the redox energy in a proton gradient. The polypeptide is NAD(P)H-quinone oxidoreductase subunit J, chloroplastic (Nuphar advena (Common spatterdock)).